Here is a 341-residue protein sequence, read N- to C-terminus: tRNA N6-adenosine threonylcarbamoyltransferase (341 aa).

Residues His111 and His115 each contribute to the Fe cation site. Substrate contacts are provided by residues 134–138 (LVSGG), Asp167, Gly180, and Asn276. Asp304 serves as a coordination point for Fe cation.

It belongs to the KAE1 / TsaD family. Requires Fe(2+) as cofactor.

It is found in the cytoplasm. The catalysed reaction is L-threonylcarbamoyladenylate + adenosine(37) in tRNA = N(6)-L-threonylcarbamoyladenosine(37) in tRNA + AMP + H(+). In terms of biological role, required for the formation of a threonylcarbamoyl group on adenosine at position 37 (t(6)A37) in tRNAs that read codons beginning with adenine. Is involved in the transfer of the threonylcarbamoyl moiety of threonylcarbamoyl-AMP (TC-AMP) to the N6 group of A37, together with TsaE and TsaB. TsaD likely plays a direct catalytic role in this reaction. This chain is tRNA N6-adenosine threonylcarbamoyltransferase, found in Pseudomonas fluorescens (strain ATCC BAA-477 / NRRL B-23932 / Pf-5).